A 64-amino-acid polypeptide reads, in one-letter code: Small cysteine-rich protein (64 aa).

Positions 1–17 (FVCVQARQIDPEQILRT) are cleaved as a signal peptide. Positions 18-19 (PE) are excised as a propeptide.

Post-translationally, contains 4 disulfide bonds.

It is found in the secreted. The protein resides in the nematocyst. This chain is Small cysteine-rich protein, found in Anemonia viridis (Snakelocks anemone).